The following is a 665-amino-acid chain: LisH domain-containing protein ARMC9 (665 aa).

The 33-residue stretch at 7-39 folds into the LisH domain; that stretch reads HESELLGLVKEYLDFAEFEDTLKTFSKECKIKG. Residues 201–235 adopt a coiled-coil conformation; that stretch reads ENGQSNKEMLQQLHQQLVEAERRSMTYLKRYNKIQ. Ser582 carries the post-translational modification Phosphoserine. A disordered region spans residues 642-665; sequence VQWSGDEPLQRPVTPGGHRNGYPV.

As to quaternary structure, interacts with TOGARAM1, CCDC66, CEP104, CSPP1 and CEP290. Interacts with NDUFAF2.

Its subcellular location is the cytoplasm. The protein localises to the cytoskeleton. It is found in the cilium basal body. The protein resides in the cell projection. It localises to the cilium. Its subcellular location is the microtubule organizing center. The protein localises to the centrosome. It is found in the centriole. Functionally, involved in ciliogenesis. It is required for appropriate acetylation and polyglutamylation of ciliary microtubules, and regulation of cilium length. Acts as a positive regulator of hedgehog (Hh)signaling. May participate in the trafficking and/or retention of GLI2 and GLI3 proteins at the ciliary tip. The chain is LisH domain-containing protein ARMC9 (ARMC9) from Pongo abelii (Sumatran orangutan).